We begin with the raw amino-acid sequence, 385 residues long: Protein pelota homolog (385 aa).

Lys162 participates in a covalent cross-link: Glycyl lysine isopeptide (Lys-Gly) (interchain with G-Cter in SUMO2). Residues Ser374, Ser380, Ser381, and Ser382 each carry the phosphoserine modification.

Belongs to the eukaryotic release factor 1 family. Pelota subfamily. As to quaternary structure, component of the Pelota-HBS1L complex, also named Dom34-Hbs1 complex, composed of PELO and HBS1L. Interacts with PINK1. Interacts with ABCE1. Interacts with CNOT4. The cofactor is a divalent metal cation.

It localises to the cytoplasm. Component of the Pelota-HBS1L complex, a complex that recognizes stalled ribosomes and triggers the No-Go Decay (NGD) pathway. In the Pelota-HBS1L complex, PELO recognizes ribosomes stalled at the 3' end of an mRNA and engages stalled ribosomes by destabilizing mRNA in the mRNA channel. Following mRNA extraction from stalled ribosomes by the SKI complex, the Pelota-HBS1L complex promotes recruitment of ABCE1, which drives the disassembly of stalled ribosomes, followed by degradation of damaged mRNAs as part of the NGD pathway. As part of the PINK1-regulated signaling, upon mitochondrial damage is recruited to the ribosome/mRNA-ribonucleoprotein complex associated to mitochondrial outer membrane thereby enabling the recruitment of autophagy receptors and induction of mitophagy. The protein is Protein pelota homolog (Pelo) of Rattus norvegicus (Rat).